The primary structure comprises 335 residues: Transmembrane protein 120B-B (335 aa).

The stretch at 1 to 39 forms a coiled coil; the sequence is MSLQKCQEEWGELEKEFQQLQETHKVYKQKLEELSSLQN. Transmembrane regions (helical) follow at residues 100 to 116, 130 to 150, 157 to 177, 193 to 213, 268 to 288, and 300 to 320; these read SLYLNLVLGNVNVTLLS, FKLYLTIILLLGAITCRFVLH, VFNFLLVWYFCTLTIRESILI, VSTFLSGVMLTWPDGLMYQMF, FLLPVLFFGHFWQLYNAMTLF, and QVFVLALTFLLLFLGNFLTTL.

It belongs to the TMEM120 family.

Its subcellular location is the nucleus inner membrane. In terms of biological role, necessary for efficient adipogenesis. Does not show ion channel activity. In Xenopus laevis (African clawed frog), this protein is Transmembrane protein 120B-B (tmem120b-b).